The following is a 1130-amino-acid chain: Integrin alpha-6 (1130 aa).

Residues 1-23 (MAAAGQLCLLYLSAGLLSRLGAA) form the signal peptide. Residues 24 to 1050 (FNLDTREDNV…FPSKTVAQYS (1027 aa)) lie on the Extracellular side of the membrane. FG-GAP repeat units lie at residues 30-95 (EDNV…GPCT), 101-166 (NDAD…IEDD), 176-229 (DGRL…FFDM), 283-339 (EQPD…KSAH), 340-402 (LLPE…RWNN), 403-458 (VKPI…GINT), and 459-518 (KPTQ…VTPN). Asparagine 78 is a glycosylation site (N-linked (GlcNAc...) asparagine). 3 disulfide bridges follow: cysteine 86/cysteine 94, cysteine 131/cysteine 154, and cysteine 175/cysteine 188. Residues asparagine 223 and asparagine 323 are each glycosylated (N-linked (GlcNAc...) asparagine). Residues aspartate 363, asparagine 365, aspartate 367, and aspartate 371 each coordinate Ca(2+). The N-linked (GlcNAc...) asparagine glycan is linked to asparagine 409. Residues aspartate 425, asparagine 427, aspartate 429, tyrosine 431, aspartate 433, aspartate 480, aspartate 482, asparagine 484, tyrosine 486, and aspartate 488 each coordinate Ca(2+). Disulfide bonds link cysteine 528–cysteine 535, cysteine 541–cysteine 601, cysteine 665–cysteine 671, and cysteine 765–cysteine 776. N-linked (GlcNAc...) asparagine glycosylation is found at asparagine 770, asparagine 787, asparagine 930, and asparagine 966. 2 disulfides stabilise this stretch: cysteine 920-cysteine 967 and cysteine 973-cysteine 978. N-linked (GlcNAc...) asparagine glycosylation occurs at asparagine 997. The chain crosses the membrane as a helical span at residues 1051-1076 (GVPWWIILVAILAGILMLALLVFILW). Phosphoserine occurs at positions 1059 and 1064. The interval 1077 to 1083 (KCGFFKR) is interaction with HPS5. The Cytoplasmic portion of the chain corresponds to 1077–1130 (KCGFFKRSRYDDSVPRYHAVRIRKEEREIKDEKYIDNLEKKQWITKWNENESYS). The S-palmitoyl cysteine; by DHHC3 moiety is linked to residue cysteine 1078. Residues 1079–1083 (GFFKR) carry the GFFKR motif motif. Arginine 1103 bears the Phosphoserine mark.

It belongs to the integrin alpha chain family. Heterodimer of an alpha and a beta subunit. The alpha subunit is composed of a heavy and a light chain linked by a disulfide bond. Alpha-6 associates with either beta-1 (ITGB1) or beta-4 (ITGB4) to form ITGA6:ITGB1 and ITGA6:ITGB4, respectively. ITGA6:ITGB1 is found in a complex with CD9; interaction takes place in oocytes and is involved in sperm-egg fusion. ITGA6:ITGB4 is found in a ternary complex with NRG1 and ERBB3. ITGA6:ITGB4 is found in a ternary complex with IGF1 and IGF1R. ITGA6:ITGB4 interacts with IGF2. Interacts with ADAM9. Interacts with RAB21. Interacts with MDK. ITGA6:ITGB1 interacts with MDK; this interaction mediates MDK-induced neurite outgrowth. Interacts with CD82; this interaction down-regulates ITGA6-mediated cell adhesion. In terms of processing, isoforms containing segment A, but not segment B, are the major targets for PMA-induced phosphorylation. Phosphorylation occurs on 'Ser-1103' of isoform alpha-6X1X2A. Phosphorylation is not required for the induction of integrin alpha-6A/beta-1 high affinity but may reduce the affinity for ligand. Post-translationally, undergoes PLAU-mediated cleavage at residues Arg-634-635-Arg in a time-dependent manner to produce processed integrin alpha-6 (alpha6p). Production of alpha6p enhances prostate cancer cell invasion and migration. Palmitoylation by DHHC3 enhances stability and cell surface expression. Integrin alpha-6/beta-4 is predominantly expressed by epithelia. Isoforms containing segment X1 are ubiquitously expressed. Isoforms containing segment X1X2 are expressed in heart, kidney, placenta, colon, duodenum, myoblasts and myotubes, and in a limited number of cell lines; they are always coexpressed with the ubiquitous isoform containing segment X1. In some tissues (e.g. Salivary gland), isoforms containing cytoplasmic segment A and isoforms containing segment B are detected while in others, only isoforms containing one cytoplasmic segment are found (segment A in epidermis and segment B in kidney). Processed integrin alpha-6: Expressed at low levels in normal prostate tissue with elevated levels in prostate cancer tissue (at protein level).

The protein resides in the cell membrane. Integrin alpha-6/beta-1 (ITGA6:ITGB1) is a receptor for laminin on platelets. Integrin alpha-6/beta-1 (ITGA6:ITGB1) is present in oocytes and is involved in sperm-egg fusion. Integrin alpha-6/beta-4 (ITGA6:ITGB4) is a receptor for laminin in epithelial cells and it plays a critical structural role in the hemidesmosome. ITGA6:ITGB4 binds to NRG1 (via EGF domain) and this binding is essential for NRG1-ERBB signaling. ITGA6:ITGB4 binds to IGF1 and this binding is essential for IGF1 signaling. ITGA6:ITGB4 binds to IGF2 and this binding is essential for IGF2 signaling. The polypeptide is Integrin alpha-6 (ITGA6) (Homo sapiens (Human)).